The following is a 449-amino-acid chain: Exodeoxyribonuclease 7 large subunit (449 aa).

This sequence belongs to the XseA family. As to quaternary structure, heterooligomer composed of large and small subunits.

The protein resides in the cytoplasm. The enzyme catalyses Exonucleolytic cleavage in either 5'- to 3'- or 3'- to 5'-direction to yield nucleoside 5'-phosphates.. Functionally, bidirectionally degrades single-stranded DNA into large acid-insoluble oligonucleotides, which are then degraded further into small acid-soluble oligonucleotides. This Salmonella heidelberg (strain SL476) protein is Exodeoxyribonuclease 7 large subunit.